A 175-amino-acid polypeptide reads, in one-letter code: Alpha-crystallin B chain (175 aa).

At Met-1 the chain carries N-acetylmethionine. Phosphoserine is present on residues Ser-19, Ser-45, and Ser-59. Positions 56-164 (RAPSWIDTGL…PERTIPITRE (109 aa)) constitute a sHSP domain. His-83 is a binding site for Zn(2+). An N6-acetyllysine modification is found at Lys-92. Positions 104, 106, 111, and 119 each coordinate Zn(2+). The tract at residues 142-175 (VLTVNGPRKQASGPERTIPITREEKPAVTAAPKK) is disordered. An N6-acetyllysine modification is found at Lys-166. An O-linked (GlcNAc) threonine glycan is attached at Thr-170.

This sequence belongs to the small heat shock protein (HSP20) family. Heteromer composed of three CRYAA and one CRYAB subunits. Aggregates with homologous proteins, including the small heat shock protein HSPB1, to form large heteromeric complexes. Inter-subunit bridging via zinc ions enhances stability, which is crucial as there is no protein turn over in the lens. Interacts with HSPBAP1. Interacts with TTN/titin. Interacts with TMEM109; in the cellular response to DNA damage. Interacts with DES; binds rapidly during early stages of DES filament assembly and a reduced binding seen in the later stages. Interacts with TMED10; the interaction mediates the translocation from the cytoplasm into the ERGIC (endoplasmic reticulum-Golgi intermediate compartment) and thereby secretion. Interacts with ATP6V1A and with MTOR, forming a ternary complex. As to expression, lens as well as other tissues.

It is found in the cytoplasm. Its subcellular location is the nucleus. The protein localises to the secreted. The protein resides in the lysosome. In terms of biological role, may contribute to the transparency and refractive index of the lens. Has chaperone-like activity, preventing aggregation of various proteins under a wide range of stress conditions. In lens epithelial cells, stabilizes the ATP6V1A protein, preventing its degradation by the proteasome. This Rattus norvegicus (Rat) protein is Alpha-crystallin B chain.